Consider the following 360-residue polypeptide: Mannose-1-phosphate guanylyltransferase catalytic subunit beta (360 aa).

The tract at residues 2 to 222 (KALILVGGYG…QGFWMDIGQP (221 aa)) is substrate-binding domain. Asp-110 lines the GDP-alpha-D-mannose pocket. Asp-110 is a Mg(2+) binding site. Lys-162 is a catalytic residue. Asp-218 provides a ligand contact to GDP-alpha-D-mannose. Asp-218 contributes to the Mg(2+) binding site. The segment at 245-360 (CSGPGIVGNV…ESVPEPRIIM (116 aa)) is hexapeptide repeat domain.

It belongs to the transferase hexapeptide repeat family. Component of the GMPPA-GMPPB mannose-1-phosphate guanylyltransferase complex composed of 4 GMPPA subunits and 8 GMPPB subunits; the complex is organized into three layers, a central layer made up of 2 GMPPA dimers sandwiched between two layers each made up of 2 GMPPB dimers. GMPPB catalytic activity is reduced when part of the complex and binding of GDP-alpha-D-Mannose by GMPPA induces allosteric feedback inhibition of GMPPB. Mg(2+) is required as a cofactor. In terms of tissue distribution, ubiquitously expressed, including in brain and skeletal muscle. Weakly expressed with highest expression in skeletal muscle, brain and gonads.

It localises to the cytoplasm. The catalysed reaction is alpha-D-mannose 1-phosphate + GTP + H(+) = GDP-alpha-D-mannose + diphosphate. The protein operates within nucleotide-sugar biosynthesis; GDP-alpha-D-mannose biosynthesis; GDP-alpha-D-mannose from alpha-D-mannose 1-phosphate (GTP route): step 1/1. Enzyme activity is reduced by incorporation into the GMPPA-GMPPB mannose-1-phosphate guanylyltransferase complex. Allosterically inhibited, when part of the GMPPA-GMPPB complex, by GDP-alpha-D-mannose binding to GMPPA. Catalytic subunit of the GMPPA-GMPPB mannose-1-phosphate guanylyltransferase complex. Catalyzes the formation of GDP-mannose, an essential precursor of glycan moieties of glycoproteins and glycolipids. Can catalyze the reverse reaction in vitro. Together with GMPPA regulates GDP-alpha-D-mannose levels. The protein is Mannose-1-phosphate guanylyltransferase catalytic subunit beta of Homo sapiens (Human).